The chain runs to 195 residues: Nucleoside triphosphate pyrophosphatase (195 aa).

The active-site Proton acceptor is Asp-70.

It belongs to the Maf family. The cofactor is a divalent metal cation.

The protein localises to the cytoplasm. The enzyme catalyses a ribonucleoside 5'-triphosphate + H2O = a ribonucleoside 5'-phosphate + diphosphate + H(+). It carries out the reaction a 2'-deoxyribonucleoside 5'-triphosphate + H2O = a 2'-deoxyribonucleoside 5'-phosphate + diphosphate + H(+). Nucleoside triphosphate pyrophosphatase. May have a dual role in cell division arrest and in preventing the incorporation of modified nucleotides into cellular nucleic acids. The sequence is that of Nucleoside triphosphate pyrophosphatase from Microcystis aeruginosa (strain NIES-843 / IAM M-2473).